The sequence spans 101 residues: Small ribosomal subunit protein uS14 (101 aa).

The protein belongs to the universal ribosomal protein uS14 family. In terms of assembly, part of the 30S ribosomal subunit. Contacts proteins S3 and S10.

Its function is as follows. Binds 16S rRNA, required for the assembly of 30S particles and may also be responsible for determining the conformation of the 16S rRNA at the A site. The chain is Small ribosomal subunit protein uS14 from Buchnera aphidicola subsp. Acyrthosiphon pisum (strain APS) (Acyrthosiphon pisum symbiotic bacterium).